Here is a 1129-residue protein sequence, read N- to C-terminus: Ubiquitin carboxyl-terminal hydrolase 15 (1129 aa).

The tract at residues 1–26 (MVLSNVDAEEVNMDSSMELEESSQEP) is disordered. Acidic residues predominate over residues 7 to 23 (DAEEVNMDSSMELEESS). The MATH domain maps to 51–204 (HASYSWVVKN…NDEICISVTV (154 aa)). The 316-residue stretch at 230–545 (VGLKNQGATC…NAYMLVYFRK (316 aa)) folds into the USP domain. The Nucleophile role is filled by cysteine 239. Histidine 481 acts as the Proton acceptor in catalysis.

It belongs to the peptidase C19 family.

It is found in the nucleus. It carries out the reaction Thiol-dependent hydrolysis of ester, thioester, amide, peptide and isopeptide bonds formed by the C-terminal Gly of ubiquitin (a 76-residue protein attached to proteins as an intracellular targeting signal).. Functionally, hydrolase that deubiquitinates target proteins. Cleaves the UBL propeptide in sde2. Involved in regulating the steady-state levels of proteins including prp4. The chain is Ubiquitin carboxyl-terminal hydrolase 15 from Schizosaccharomyces pombe (strain 972 / ATCC 24843) (Fission yeast).